An 82-amino-acid polypeptide reads, in one-letter code: Antimicrobial peptide Smp43 (82 aa).

The N-terminal stretch at 1–22 is a signal peptide; the sequence is MNRKLLLVTLMVTMLVMQPAEA. Positions 66–82 are excised as a propeptide; sequence EAGQMPFDEFMDILYES.

It belongs to the non-disulfide-bridged peptide (NDBP) superfamily. Long chain multifunctional peptide (group 2) family. In terms of tissue distribution, expressed by the venom gland.

It is found in the secreted. Its subcellular location is the target cell membrane. Its function is as follows. Antimicrobial peptide with moderate activity against Gram-positive bacteria and Gram-negative bacteria, as well as low activity against fungi. Acts by inducing bacterial membrane disruption. Shows activity against B.subtilis (MIC=4 ug/ml), S.epidermidis (MIC=64 ug/ml), S.aureus (MIC=32 ug/ml), E.coli (MIC=128 ug/ml), K.pneumoniae (MIC=64 ug/ml), P.aeruginosa (MIC=64 ug/ml), and C.albicans (MIC=128 ug/ml). Does not show hemolysis activity. This is Antimicrobial peptide Smp43 from Scorpio palmatus (Israeli golden scorpion).